The sequence spans 414 residues: MTIKTLALQCRDAAQVVSQLSAQAKHALLEAMAAALETDAAAILAANARDLEAARAKGTGSAMLDRLALDDKRMAGIAAALREVAQLPDPVGQITRQEVRPNGIRVQKMRVPLGVIAMIYEARPNVTADAAALCIKAGNGVILRGGSEAIHSNTAIARALQGALREANVPEAALTLVEDLRRETMLELLQLNDIVDLAIPRGGEGLIRFVAEHARVPVIKHYKGVCHLFVDASADLALALRLLIDGKATRPAACNSLETLLVHADIAERFLPLAAQALRERKVELRGDAATRAVLPEIAPASDDDYAAEFLDLILAIRVVPDLDTALAHIRQHGSDHTEVIATQDADNAERFVQALRSAVVMVNASSRFSDGGELGLGAEIGISTTRLHSYGPMGLEALTVERFVVRGEGQVRH.

This sequence belongs to the gamma-glutamyl phosphate reductase family.

The protein resides in the cytoplasm. It catalyses the reaction L-glutamate 5-semialdehyde + phosphate + NADP(+) = L-glutamyl 5-phosphate + NADPH + H(+). Its pathway is amino-acid biosynthesis; L-proline biosynthesis; L-glutamate 5-semialdehyde from L-glutamate: step 2/2. In terms of biological role, catalyzes the NADPH-dependent reduction of L-glutamate 5-phosphate into L-glutamate 5-semialdehyde and phosphate. The product spontaneously undergoes cyclization to form 1-pyrroline-5-carboxylate. This Xanthomonas axonopodis pv. citri (strain 306) protein is Gamma-glutamyl phosphate reductase.